The chain runs to 483 residues: Membrane-bound lytic murein transglycosylase F (483 aa).

The first 18 residues, 1–18, serve as a signal peptide directing secretion; that stretch reads MKGLIARFIAGFALLLWA. Positions 19-267 are non-LT domain; that stretch reads WDMVFPWQQL…RIEEKYFNHL (249 aa). The interval 269-483 is LT domain; that stretch reads HFDYVDIQSY…SKESDSTLKE (215 aa). Residue Glu312 is part of the active site. Residues 459 to 483 form a disordered region; sequence QIQNNEEQSSVPQEISKESDSTLKE. Positions 473 to 483 are enriched in basic and acidic residues; sequence ISKESDSTLKE.

In the N-terminal section; belongs to the bacterial solute-binding protein 3 family. The protein in the C-terminal section; belongs to the transglycosylase Slt family.

Its subcellular location is the cell outer membrane. The enzyme catalyses Exolytic cleavage of the (1-&gt;4)-beta-glycosidic linkage between N-acetylmuramic acid (MurNAc) and N-acetylglucosamine (GlcNAc) residues in peptidoglycan, from either the reducing or the non-reducing ends of the peptidoglycan chains, with concomitant formation of a 1,6-anhydrobond in the MurNAc residue.. Functionally, murein-degrading enzyme that degrades murein glycan strands and insoluble, high-molecular weight murein sacculi, with the concomitant formation of a 1,6-anhydromuramoyl product. Lytic transglycosylases (LTs) play an integral role in the metabolism of the peptidoglycan (PG) sacculus. Their lytic action creates space within the PG sacculus to allow for its expansion as well as for the insertion of various structures such as secretion systems and flagella. The polypeptide is Membrane-bound lytic murein transglycosylase F (Actinobacillus pleuropneumoniae serotype 7 (strain AP76)).